Here is a 637-residue protein sequence, read N- to C-terminus: MMSYSERLGGPAVSPLPVRGRHMVHGATFAYVPSPQVLHRIPGTSTYAISSLSPVTLTEHSCPCGEVLECHDPLPTKLAQEEEQKPEPRLSQKLAQVGTKLLKVPLMLAFLYLFVCSLDVLSSAFQLAGGKVAGDIFKDNAILSNPVAGLVVGILVTVLVQSSSTSTSIIVSMVSSGLLEVSSAIPIIMGSNIGTSVTNTIVALMQAGDRTDFRRAFAGATVHDCFNWLSVLVLLPLEAATGYLHHVTGLVVASFNIRGGRDAPDLLKVITEPFTRLIIQLDKSVITSIAVGDESLRNHSLIRIWCHPDTTEASTSMSRVEAIGSLANTTMEKCNHIFVDTGLPDLAVGLILLAGSLVVLCTCLILLVKMLNSLLKGQVMSSRRSSTQTDFPAPFTWVTGYFAMVVGASMTFVVQSSSVFTSAITPLIGLGVISIERAYPLTLGSNIGTTTTAILAALASPREKLSSSFQIALCHFFFNISGILLWYPLPCTRLPIRMAKALGKRTAKYRWFAVLYLLVCFLLLPSLVFGISMAGWQAMVGVGTPFGALLAFVVLVNVLQSRSPGHLPKWLQTWDFLPRWMHSLQPLDGLITRATLCYARPEPRSPQLPPRVFLEELPPATPSPRLALPAHHNATRL.

The Cytoplasmic segment spans residues 1 to 103; that stretch reads MMSYSERLGG…LAQVGTKLLK (103 aa). Ser14 and Ser34 each carry phosphoserine. Residues 104–125 form a helical membrane-spanning segment; the sequence is VPLMLAFLYLFVCSLDVLSSAF. The Extracellular segment spans residues 126 to 145; that stretch reads QLAGGKVAGDIFKDNAILSN. Residues 146 to 163 traverse the membrane as a helical segment; it reads PVAGLVVGILVTVLVQSS. The Cytoplasmic portion of the chain corresponds to 164–165; that stretch reads ST. A helical transmembrane segment spans residues 166 to 185; sequence STSIIVSMVSSGLLEVSSAI. At 186 to 345 the chain is on the extracellular side; it reads PIIMGSNIGT…HIFVDTGLPD (160 aa). 2 disulfide bridges follow: Cys225–Cys520 and Cys306–Cys334. Asn298 and Asn328 each carry an N-linked (GlcNAc...) asparagine glycan. A helical transmembrane segment spans residues 346 to 368; that stretch reads LAVGLILLAGSLVVLCTCLILLV. Residues 369 to 410 are Cytoplasmic-facing; sequence KMLNSLLKGQVMSSRRSSTQTDFPAPFTWVTGYFAMVVGASM. The helical transmembrane segment at 411 to 434 threads the bilayer; it reads TFVVQSSSVFTSAITPLIGLGVIS. Residues 435-464 are Extracellular-facing; it reads IERAYPLTLGSNIGTTTTAILAALASPREK. The chain crosses the membrane as a helical span at residues 465 to 485; sequence LSSSFQIALCHFFFNISGILL. Residues 486 to 511 are Cytoplasmic-facing; sequence WYPLPCTRLPIRMAKALGKRTAKYRW. Phosphothreonine; by PKC is present on Thr506. A helical transmembrane segment spans residues 512–532; that stretch reads FAVLYLLVCFLLLPSLVFGIS. The Extracellular segment spans residues 533–537; sequence MAGWQ. The chain crosses the membrane as a helical span at residues 538–559; that stretch reads AMVGVGTPFGALLAFVVLVNVL. At 560–637 the chain is on the cytoplasmic side; the sequence is QSRSPGHLPK…LPAHHNATRL (78 aa). Ser605 carries the phosphoserine modification. The residue at position 621 (Thr621) is a Phosphothreonine. Phosphoserine is present on Ser623.

The protein belongs to the SLC34A transporter family. As to quaternary structure, interacts via its C-terminal region with NHERF4. Interacts with NHERF1. Interacts with TMEM174; regulates SLC34A1 internalization by PTH and FGF23. As to expression, kidney.

The protein resides in the apical cell membrane. It is found in the cell membrane. It catalyses the reaction 3 Na(+)(out) + phosphate(out) = 3 Na(+)(in) + phosphate(in). Functionally, involved in actively transporting phosphate into cells via Na(+) cotransport in the renal brush border membrane. The cotransport has a Na(+):Pi stoichiometry of 3:1 and is electrogenic. The chain is Sodium-dependent phosphate transport protein 2A from Mus musculus (Mouse).